The chain runs to 258 residues: Transcription cofactor vestigial-like protein 1 (258 aa).

Composition is skewed to polar residues over residues 55 to 65 and 74 to 87; these read PQELTPSSQSE and SMSP…SPWT. The segment at 55-93 is disordered; sequence PQELTPSSQSEGVMLKNDDSMSPNQWRYSSPWTKPQPEV.

It belongs to the vestigial family. Interacts with TEFs.

It localises to the nucleus. In terms of biological role, may act as a specific coactivator for the mammalian TEFs. The sequence is that of Transcription cofactor vestigial-like protein 1 (VGLL1) from Homo sapiens (Human).